Reading from the N-terminus, the 125-residue chain is Egg cell-secreted protein 1.3 (125 aa).

An N-terminal signal peptide occupies residues 1–24 (MASNTSFLFVTVTLLLVLNVSSRA).

Belongs to the plant egg cell-secreted peptide family. Restricted to female reproductive tissues, specifically accumulating in storage vesicles of the unfertilized egg cell.

It localises to the cytoplasmic vesicle. The protein resides in the secreted. Involved in the regulation of gamete interactions during the double fertilization and to prevent multiple-pollen tube attraction; mediates the redistribution of the gamete fusogen HAP2/GCS1 to the cell surface after secretion upon sperm arrival. This is Egg cell-secreted protein 1.3 (EC1.3) from Arabidopsis thaliana (Mouse-ear cress).